Consider the following 680-residue polypeptide: DNA-directed RNA polymerase subunit beta' (680 aa).

Positions 69, 71, 87, and 90 each coordinate Zn(2+). D489, D491, and D493 together coordinate Mg(2+).

Belongs to the RNA polymerase beta' chain family. RpoC1 subfamily. In terms of assembly, in plastids the minimal PEP RNA polymerase catalytic core is composed of four subunits: alpha, beta, beta', and beta''. When a (nuclear-encoded) sigma factor is associated with the core the holoenzyme is formed, which can initiate transcription. Mg(2+) serves as cofactor. It depends on Zn(2+) as a cofactor.

Its subcellular location is the plastid. It localises to the chloroplast. The enzyme catalyses RNA(n) + a ribonucleoside 5'-triphosphate = RNA(n+1) + diphosphate. Functionally, DNA-dependent RNA polymerase catalyzes the transcription of DNA into RNA using the four ribonucleoside triphosphates as substrates. The chain is DNA-directed RNA polymerase subunit beta' from Capsella bursa-pastoris (Shepherd's purse).